The sequence spans 93 residues: DNA/RNA-binding protein Alba (93 aa).

Residue Lys11 is modified to N6-acetyllysine.

Belongs to the histone-like Alba family. Acetylated. Acetylation at Lys-11 decreases DNA-binding affinity.

The protein resides in the cytoplasm. It localises to the chromosome. Binds double-stranded DNA tightly but without sequence specificity. Involved in DNA compaction. The sequence is that of DNA/RNA-binding protein Alba from Pyrococcus furiosus (strain ATCC 43587 / DSM 3638 / JCM 8422 / Vc1).